The chain runs to 156 residues: Ribosomal RNA large subunit methyltransferase H (156 aa).

S-adenosyl-L-methionine-binding positions include Leu73, Gly104, and Leu123–Leu128.

Belongs to the RNA methyltransferase RlmH family. In terms of assembly, homodimer.

Its subcellular location is the cytoplasm. It catalyses the reaction pseudouridine(1915) in 23S rRNA + S-adenosyl-L-methionine = N(3)-methylpseudouridine(1915) in 23S rRNA + S-adenosyl-L-homocysteine + H(+). In terms of biological role, specifically methylates the pseudouridine at position 1915 (m3Psi1915) in 23S rRNA. The chain is Ribosomal RNA large subunit methyltransferase H from Bordetella bronchiseptica (strain ATCC BAA-588 / NCTC 13252 / RB50) (Alcaligenes bronchisepticus).